Reading from the N-terminus, the 428-residue chain is Gamma-glutamyl phosphate reductase (428 aa).

Belongs to the gamma-glutamyl phosphate reductase family.

Its subcellular location is the cytoplasm. It catalyses the reaction L-glutamate 5-semialdehyde + phosphate + NADP(+) = L-glutamyl 5-phosphate + NADPH + H(+). The protein operates within amino-acid biosynthesis; L-proline biosynthesis; L-glutamate 5-semialdehyde from L-glutamate: step 2/2. Its function is as follows. Catalyzes the NADPH-dependent reduction of L-glutamate 5-phosphate into L-glutamate 5-semialdehyde and phosphate. The product spontaneously undergoes cyclization to form 1-pyrroline-5-carboxylate. In Anaeromyxobacter sp. (strain Fw109-5), this protein is Gamma-glutamyl phosphate reductase.